Reading from the N-terminus, the 102-residue chain is Large ribosomal subunit protein mL63 (102 aa).

The protein belongs to the mitochondrion-specific ribosomal protein mL63 family.

Its subcellular location is the mitochondrion. The sequence is that of Large ribosomal subunit protein mL63 (MRPL57) from Bos taurus (Bovine).